The following is a 157-amino-acid chain: Crossover junction endodeoxyribonuclease RuvC (157 aa).

Catalysis depends on residues Asp9, Glu70, and Asp142. Mg(2+)-binding residues include Asp9, Glu70, and Asp142.

This sequence belongs to the RuvC family. In terms of assembly, homodimer which binds Holliday junction (HJ) DNA. The HJ becomes 2-fold symmetrical on binding to RuvC with unstacked arms; it has a different conformation from HJ DNA in complex with RuvA. In the full resolvosome a probable DNA-RuvA(4)-RuvB(12)-RuvC(2) complex forms which resolves the HJ. It depends on Mg(2+) as a cofactor.

It is found in the cytoplasm. The enzyme catalyses Endonucleolytic cleavage at a junction such as a reciprocal single-stranded crossover between two homologous DNA duplexes (Holliday junction).. In terms of biological role, the RuvA-RuvB-RuvC complex processes Holliday junction (HJ) DNA during genetic recombination and DNA repair. Endonuclease that resolves HJ intermediates. Cleaves cruciform DNA by making single-stranded nicks across the HJ at symmetrical positions within the homologous arms, yielding a 5'-phosphate and a 3'-hydroxyl group; requires a central core of homology in the junction. The consensus cleavage sequence is 5'-(A/T)TT(C/G)-3'. Cleavage occurs on the 3'-side of the TT dinucleotide at the point of strand exchange. HJ branch migration catalyzed by RuvA-RuvB allows RuvC to scan DNA until it finds its consensus sequence, where it cleaves and resolves the cruciform DNA. The chain is Crossover junction endodeoxyribonuclease RuvC from Cyanothece sp. (strain PCC 7425 / ATCC 29141).